Reading from the N-terminus, the 139-residue chain is Flagellar assembly factor FliW 2 (139 aa).

Belongs to the FliW family. Interacts with translational regulator CsrA and flagellin(s).

It localises to the cytoplasm. Acts as an anti-CsrA protein, binds CsrA and prevents it from repressing translation of its target genes, one of which is flagellin. Binds to flagellin and participates in the assembly of the flagellum. The polypeptide is Flagellar assembly factor FliW 2 (Helicobacter hepaticus (strain ATCC 51449 / 3B1)).